The sequence spans 100 residues: MAKKSLIYREKKRQKLEKKYHLIRRSLKKEISQIPSLSEKWKIHGKLQSPPRNSAPTRLHRRCFSTGRPRANYRDFGLSGHILREMVQACLLPGATRASW.

Belongs to the universal ribosomal protein uS14 family. Part of the 30S ribosomal subunit.

Its subcellular location is the plastid. The protein resides in the chloroplast. Its function is as follows. Binds 16S rRNA, required for the assembly of 30S particles. This chain is Small ribosomal subunit protein uS14c, found in Barbarea verna (Land cress).